Consider the following 294-residue polypeptide: Acetyl-coenzyme A carboxylase carboxyl transferase subunit beta (294 aa).

The CoA carboxyltransferase N-terminal domain occupies 30–294 (IMTKCPECKK…PETGGESDGE (265 aa)). Residues Cys34, Cys37, Cys53, and Cys56 each coordinate Zn(2+). Residues 34–56 (CPECKKIMYTKELQKNLMVCNYC) form a C4-type zinc finger.

This sequence belongs to the AccD/PCCB family. Acetyl-CoA carboxylase is a heterohexamer composed of biotin carboxyl carrier protein (AccB), biotin carboxylase (AccC) and two subunits each of ACCase subunit alpha (AccA) and ACCase subunit beta (AccD). The cofactor is Zn(2+).

The protein resides in the cytoplasm. It carries out the reaction N(6)-carboxybiotinyl-L-lysyl-[protein] + acetyl-CoA = N(6)-biotinyl-L-lysyl-[protein] + malonyl-CoA. The protein operates within lipid metabolism; malonyl-CoA biosynthesis; malonyl-CoA from acetyl-CoA: step 1/1. Its function is as follows. Component of the acetyl coenzyme A carboxylase (ACC) complex. Biotin carboxylase (BC) catalyzes the carboxylation of biotin on its carrier protein (BCCP) and then the CO(2) group is transferred by the transcarboxylase to acetyl-CoA to form malonyl-CoA. The sequence is that of Acetyl-coenzyme A carboxylase carboxyl transferase subunit beta from Listeria welshimeri serovar 6b (strain ATCC 35897 / DSM 20650 / CCUG 15529 / CIP 8149 / NCTC 11857 / SLCC 5334 / V8).